Here is a 435-residue protein sequence, read N- to C-terminus: Enolase (435 aa).

Position 163 (glutamine 163) interacts with (2R)-2-phosphoglycerate. The active-site Proton donor is the glutamate 205. Aspartate 243, glutamate 292, and aspartate 319 together coordinate Mg(2+). Residues lysine 344, arginine 373, serine 374, and lysine 395 each coordinate (2R)-2-phosphoglycerate. Catalysis depends on lysine 344, which acts as the Proton acceptor.

Belongs to the enolase family. It depends on Mg(2+) as a cofactor.

The protein resides in the cytoplasm. The protein localises to the secreted. It localises to the cell surface. It catalyses the reaction (2R)-2-phosphoglycerate = phosphoenolpyruvate + H2O. It participates in carbohydrate degradation; glycolysis; pyruvate from D-glyceraldehyde 3-phosphate: step 4/5. Its function is as follows. Catalyzes the reversible conversion of 2-phosphoglycerate (2-PG) into phosphoenolpyruvate (PEP). It is essential for the degradation of carbohydrates via glycolysis. This is Enolase from Streptococcus equi subsp. zooepidemicus (strain MGCS10565).